The sequence spans 143 residues: Large ribosomal subunit protein uL11 (143 aa).

The protein belongs to the universal ribosomal protein uL11 family. In terms of assembly, part of the ribosomal stalk of the 50S ribosomal subunit. Interacts with L10 and the large rRNA to form the base of the stalk. L10 forms an elongated spine to which L12 dimers bind in a sequential fashion forming a multimeric L10(L12)X complex. Post-translationally, one or more lysine residues are methylated.

In terms of biological role, forms part of the ribosomal stalk which helps the ribosome interact with GTP-bound translation factors. The polypeptide is Large ribosomal subunit protein uL11 (Salinispora tropica (strain ATCC BAA-916 / DSM 44818 / JCM 13857 / NBRC 105044 / CNB-440)).